An 89-amino-acid chain; its full sequence is Small ribosomal subunit protein uS14 (89 aa).

It belongs to the universal ribosomal protein uS14 family. As to quaternary structure, part of the 30S ribosomal subunit. Contacts proteins S3 and S10.

Its function is as follows. Binds 16S rRNA, required for the assembly of 30S particles and may also be responsible for determining the conformation of the 16S rRNA at the A site. In Exiguobacterium sibiricum (strain DSM 17290 / CCUG 55495 / CIP 109462 / JCM 13490 / 255-15), this protein is Small ribosomal subunit protein uS14.